Reading from the N-terminus, the 70-residue chain is Bowman-Birk type proteinase inhibitor A-II (70 aa).

Intrachain disulfides connect C11/C68, C12/C29, C15/C63, C17/C27, C36/C43, C40/C55, and C45/C53.

This sequence belongs to the Bowman-Birk serine protease inhibitor family.

These proteins inhibit trypsin and chymotrypsin, having 2 sites of interaction with trypsin. The site of interaction with chymotrypsin has not been determined but is not independent of the trypsin-reactive sites. This chain is Bowman-Birk type proteinase inhibitor A-II, found in Arachis hypogaea (Peanut).